Here is a 71-residue protein sequence, read N- to C-terminus: UPF0346 protein SPP_0954 (71 aa).

This sequence belongs to the UPF0346 family.

The polypeptide is UPF0346 protein SPP_0954 (Streptococcus pneumoniae (strain P1031)).